Here is a 146-residue protein sequence, read N- to C-terminus: Hemoglobin subunit beta (146 aa).

N-acetylvaline is present on Val-1. A Globin domain is found at 2–146; sequence HLTGEEKAAV…VATALAHKYH (145 aa). Thr-12 is modified (phosphothreonine). Phosphoserine is present on Ser-44. Lys-59 is modified (N6-acetyllysine). His-63 contacts heme b. Position 82 is an N6-acetyllysine (Lys-82). A heme b-binding site is contributed by His-92. Position 93 is an S-nitrosocysteine (Cys-93). At Lys-144 the chain carries N6-acetyllysine.

Belongs to the globin family. In terms of assembly, heterotetramer of two alpha chains and two beta chains. In terms of tissue distribution, red blood cells.

In terms of biological role, involved in oxygen transport from the lung to the various peripheral tissues. This chain is Hemoglobin subunit beta (HBB), found in Macroderma gigas (Australian ghost bat).